The sequence spans 654 residues: Marinolic acid--CoA ligase (654 aa).

It belongs to the ATP-dependent AMP-binding enzyme family.

The catalysed reaction is ATP + a marinolic acid + CoA = AMP + diphosphate + a marinoloyl-CoA.. It carries out the reaction ATP + a pseudomonic acid + CoA = AMP + diphosphate + a pseudomonoyl-CoA.. The enzyme catalyses marinolate C + ATP + CoA = marinoloyl-CoA C + AMP + diphosphate. It catalyses the reaction pseudomonate C + ATP + CoA = pseudomonoyl-CoA C + AMP + diphosphate. It participates in antibiotic biosynthesis. Functionally, acyl-CoA ligase that catalyzes the CoA acylation of pseudomonate C, leading to the formation of pseudomonoyl-CoA C (PAC-CoA). Also shows high activity with pseudomonoyl-CoA A as substrate. In addition, can activate acetic, octanoic, 2,4-dodecadienoic and 2,4-decadienoic acids, although with much lower activity. In vivo, is probably involved in the biosynthesis of thiomarinol, a naturally occurring double-headed antibiotic. The chain is Marinolic acid--CoA ligase from Pseudoalteromonas sp. (strain SANK 73390).